We begin with the raw amino-acid sequence, 369 residues long: MFCCLGYEWLSGGCTTWHSAWVINTLADHRHRGTDFGGSPWLLIITVFLRSYKFAISLCTSYLCVSFLKTIFPSQNGHDGSTDVQQRARRSNRRRQEGIKIVLEDIFTLWRQVETKVRAKIRKMKVTTKVNRHDKINGKRKTAKEHLRKLSMKEREHREEERQVSEAEENGKLDMKEIHTYMEMFQRAQALRRRAEDYYRCKITPSARKPLCNRVRMAAVEHRHSSGLPYWPYLTAETLKNRMGHQPPPPTQQHSIIDNSLSLKTPSECVLYPLPPSADDNLKTPPECLLTPLPPSALPSADDNLKTPAECLLYPLPPSADDNLKTPPECLLTPLPPSAPPSADDNLKTPPECVCSLPFHPQRMIISRN.

The tract at residues 151–171 is disordered; that stretch reads SMKEREHREEERQVSEAEENG.

It belongs to the NPIP family.

This is Nuclear pore complex-interacting protein family member A7 (NPIPA7) from Homo sapiens (Human).